The following is a 279-amino-acid chain: Large ribosomal subunit protein uL2 (279 aa).

A disordered region spans residues 223–279; the sequence is VVMNPVDHPHGGGEGRTSGGRHPVSPWGQPTKGYKTRRSARPSDKFIVQKRKRNRNR. The span at 270 to 279 shows a compositional bias: basic residues; it reads VQKRKRNRNR.

The protein belongs to the universal ribosomal protein uL2 family. As to quaternary structure, part of the 50S ribosomal subunit. Forms a bridge to the 30S subunit in the 70S ribosome.

Functionally, one of the primary rRNA binding proteins. Required for association of the 30S and 50S subunits to form the 70S ribosome, for tRNA binding and peptide bond formation. It has been suggested to have peptidyltransferase activity; this is somewhat controversial. Makes several contacts with the 16S rRNA in the 70S ribosome. This chain is Large ribosomal subunit protein uL2, found in Leptospira borgpetersenii serovar Hardjo-bovis (strain JB197).